The sequence spans 33 residues: Ice-structuring protein SS-3 (33 aa).

Belongs to the type-I AFP family.

In terms of biological role, antifreeze proteins lower the blood freezing point. The polypeptide is Ice-structuring protein SS-3 (Myoxocephalus scorpius (Shorthorn sculpin)).